Here is a 568-residue protein sequence, read N- to C-terminus: Dual specificity tyrosine-phosphorylation-regulated kinase 3 (568 aa).

A disordered region spans residues 1–168; it reads MKWKEKLGDG…HGVIGGPNNG (168 aa). A compositionally biased stretch (polar residues) spans 77–114; that stretch reads SNTVQSDGISDSEKCSPTVSQGKSSDCLNTVKSNSSSK. The Protein kinase domain occupies 189 to 502; the sequence is YEVLKIIGKG…PAQALRHPWI (314 aa). Residues 195–203 and K218 contribute to the ATP site; that span reads IGKGSFGQV. The active-site Proton acceptor is D315. Position 330 is a phosphoserine (S330). Residue Y349 is modified to Phosphotyrosine. A Nuclear localization signal motif is present at residues 448 to 461; the sequence is RSRRGKKRGPPGSK.

The protein belongs to the protein kinase superfamily. CMGC Ser/Thr protein kinase family. MNB/DYRK subfamily. As to quaternary structure, interacts with SIRT1. The cofactor is Mg(2+). In terms of processing, protein kinase activity is activated following autophosphorylation at Tyr-349. Autophosphorylation at Ser-330 stabilizes the protein and enhances the protein kinase activity. Post-translationally, ubiquitinated at anaphase by the anaphase-promoting complex (APC/C), leading to its degradation by the proteasome.

It localises to the nucleus. Its subcellular location is the cytoplasm. The protein localises to the nucleus speckle. It is found in the cytoplasmic granule. The protein resides in the cytoskeleton. It localises to the microtubule organizing center. Its subcellular location is the centrosome. It carries out the reaction L-seryl-[protein] + ATP = O-phospho-L-seryl-[protein] + ADP + H(+). The catalysed reaction is L-threonyl-[protein] + ATP = O-phospho-L-threonyl-[protein] + ADP + H(+). The enzyme catalyses L-tyrosyl-[protein] + ATP = O-phospho-L-tyrosyl-[protein] + ADP + H(+). Its activity is regulated as follows. Protein kinase activity is activated following autophosphorylation at Tyr-349. In terms of biological role, dual-specificity protein kinase that promotes disassembly of several types of membraneless organelles during mitosis, such as stress granules, nuclear speckles and pericentriolar material. Dual-specificity tyrosine-regulated kinases (DYRKs) autophosphorylate a critical tyrosine residue in their activation loop and phosphorylate their substrate on serine and threonine residues. Acts as a central dissolvase of membraneless organelles during the G2-to-M transition, after the nuclear-envelope breakdown: acts by mediating phosphorylation of multiple serine and threonine residues in unstructured domains of proteins, such as SRRM1 and PCM1. Does not mediate disassembly of all membraneless organelles: disassembly of P-body and nucleolus is not regulated by DYRK3. Dissolution of membraneless organelles at the onset of mitosis is also required to release mitotic regulators, such as ZNF207, from liquid-unmixed organelles where they are sequestered and keep them dissolved during mitosis. Regulates mTORC1 by mediating the dissolution of stress granules: during stressful conditions, DYRK3 partitions from the cytosol to the stress granule, together with mTORC1 components, which prevents mTORC1 signaling. When stress signals are gone, the kinase activity of DYRK3 is required for the dissolution of stress granule and mTORC1 relocation to the cytosol: acts by mediating the phosphorylation of the mTORC1 inhibitor AKT1S1, allowing full reactivation of mTORC1 signaling. Also acts as a negative regulator of EPO-dependent erythropoiesis: may place an upper limit on red cell production during stress erythropoiesis. Inhibits cell death due to cytokine withdrawal in hematopoietic progenitor cells. Promotes cell survival upon genotoxic stress through phosphorylation of SIRT1: this in turn inhibits p53/TP53 activity and apoptosis. The polypeptide is Dual specificity tyrosine-phosphorylation-regulated kinase 3 (Macaca fascicularis (Crab-eating macaque)).